The primary structure comprises 360 residues: Epoxide hydrolase 3 (360 aa).

The helical transmembrane segment at 22–42 threads the bilayer; sequence AFMWSLVFSVALVAAAVYGCI. Residue Asp-173 is the Nucleophile of the active site. Tyr-281 (proton donor) is an active-site residue. His-337 acts as the Proton acceptor in catalysis.

It belongs to the AB hydrolase superfamily. Epoxide hydrolase family.

It localises to the microsome membrane. It catalyses the reaction an epoxide + H2O = an ethanediol. The enzyme catalyses 9,10-epoxyoctadecanoate + H2O = 9,10-dihydroxyoctadecanoate. It carries out the reaction 9,10-epoxy-(12Z)-octadecenoate + H2O = 9,10-dihydroxy-(12Z)-octadecenoate. The catalysed reaction is 8,9-epoxy-(5Z,11Z,14Z)-eicosatrienoate + H2O = 8,9-dihydroxy-(5Z,11Z,14Z)-eicosatrienoate. It catalyses the reaction 11,12-epoxy-(5Z,8Z,14Z)-eicosatrienoate + H2O = 11,12-dihydroxy-(5Z,8Z,14Z)-eicosatrienoate. The enzyme catalyses 14,15-epoxy-(5Z,8Z,11Z)-eicosatrienoate + H2O = 14,15-dihydroxy-(5Z,8Z,11Z)-eicosatrienoate. Its activity is regulated as follows. Inhibited by 1-(1-acetylpiperidin-4-yl)-3-(4-(trifl uoromethoxy)phenyl)urea (TPAU), 1-cyclohexyl-3-dodecylurea (CDU), 12-(3-adamantan-1-yl-ureido)-dodecanoic acid (AUDA), 1-((3S, 5S, 7S)-adamantan-1-yl)-3-(5-(2-(2-ethoxyethoxy) ethoxy)pentyl)urea (AEPU) and to a lesser extent by 8-(3-((3S, 5S, 7S)-adamantan-1-yl)ureido) octanoic acid (AUOA). Catalyzes the hydrolysis of epoxide-containing fatty acids. Active in vitro against epoxyeicosatrienoic acids (EETs) including 8,9-EET, 9,10-EET, 11,12-EET and 14,15-EET and leukotoxin. This chain is Epoxide hydrolase 3 (EPHX3), found in Homo sapiens (Human).